A 248-amino-acid chain; its full sequence is Large ribosomal subunit protein uL30 (248 aa).

At methionine 1 the chain carries N-acetylmethionine. Repeat copies occupy residues lysine 7 to leucine 18, lysine 19 to isoleucine 30, lysine 31 to leucine 42, and arginine 43 to alanine 54. The 4 X 12 AA tandem repeats stretch occupies residues lysine 7–alanine 54. The residue at position 17 (threonine 17) is a Phosphothreonine. Residue lysine 124 is modified to N6-acetyllysine. At lysine 127 the chain carries N6-succinyllysine. Phosphotyrosine is present on tyrosine 139.

It belongs to the universal ribosomal protein uL30 family. As to quaternary structure, component of the large ribosomal subunit. Homodimer. Interacts with DHX33.

The protein localises to the cytoplasm. Component of the large ribosomal subunit. The ribosome is a large ribonucleoprotein complex responsible for the synthesis of proteins in the cell. Binds to G-rich structures in 28S rRNA and in mRNAs. Plays a regulatory role in the translation apparatus; inhibits cell-free translation of mRNAs. This Bos taurus (Bovine) protein is Large ribosomal subunit protein uL30 (RPL7).